A 426-amino-acid polypeptide reads, in one-letter code: Growth-regulating factor 9 (426 aa).

Positions 92–127 (PFTPSQWMELEHQALIYKYLNAKAPIPSSLLISISK) constitute a QLQ domain. The 45-residue stretch at 151-195 (DPEPGRCRRTDGKKWRCSKEAMADHKYCERHINRNRHRSRKPVEN) folds into the WRC domain. 2 consecutive short sequence motifs (bipartite nuclear localization signal) follow at residues 156 to 166 (RCRRTDGKKWR) and 184 to 191 (RNRHRSRK). A disordered region spans residues 184-222 (RNRHRSRKPVENQSRKTVKETPCAGSLPSSVGQGSFKKA). The span at 191-202 (KPVENQSRKTVK) shows a compositional bias: basic and acidic residues.

Belongs to the GRF family.

Its subcellular location is the nucleus. Functionally, transcription activator that plays a regulatory role in gibberellin-induced stem elongation. The sequence is that of Growth-regulating factor 9 (GRF9) from Oryza sativa subsp. japonica (Rice).